Reading from the N-terminus, the 104-residue chain is DNA-directed RNA polymerase subunit Rpo13 (104 aa).

Disordered stretches follow at residues 1 to 33 (MVSGMSTDEEKEGTSDEEVNEEKEVEETSEDEF) and 78 to 104 (RDSRRKAKKAVSKKVKKTKKKEKSVEG). Positions 7 to 31 (TDEEKEGTSDEEVNEEKEVEETSED) are enriched in acidic residues. Residues 80 to 104 (SRRKAKKAVSKKVKKTKKKEKSVEG) show a composition bias toward basic residues.

Belongs to the archaeal Rpo13 RNA polymerase subunit family. As to quaternary structure, part of the 13-subunit RNA polymerase complex.

Its subcellular location is the cytoplasm. It carries out the reaction RNA(n) + a ribonucleoside 5'-triphosphate = RNA(n+1) + diphosphate. Functionally, DNA-dependent RNA polymerase (RNAP) catalyzes the transcription of DNA into RNA using the four ribonucleoside triphosphates as substrates. Probably binds dsDNA. The chain is DNA-directed RNA polymerase subunit Rpo13 from Saccharolobus solfataricus (strain ATCC 35092 / DSM 1617 / JCM 11322 / P2) (Sulfolobus solfataricus).